A 420-amino-acid chain; its full sequence is Serine/threonine transporter SstT (420 aa).

9 helical membrane-spanning segments follow: residues 14–34 (IMIG…WTFI), 40–60 (LFVG…IIAS), 71–91 (YVGS…VVAV), 172–192 (ITTV…GLVF), 210–230 (LLLL…AIVF), 283–303 (IPLG…IMTL), 309–329 (LGMS…AVSA), 332–352 (ASGI…LFGI), and 356–376 (IAMQ…SIET).

The protein belongs to the dicarboxylate/amino acid:cation symporter (DAACS) (TC 2.A.23) family.

It localises to the cell membrane. It catalyses the reaction L-serine(in) + Na(+)(in) = L-serine(out) + Na(+)(out). The catalysed reaction is L-threonine(in) + Na(+)(in) = L-threonine(out) + Na(+)(out). Involved in the import of serine and threonine into the cell, with the concomitant import of sodium (symport system). The sequence is that of Serine/threonine transporter SstT from Enterococcus faecalis (strain ATCC 700802 / V583).